The sequence spans 212 residues: Probable GTP-binding protein EngB (212 aa).

One can recognise an EngB-type G domain in the interval 22 to 212 (GVSEFAFFGR…NILSLIAKRI (191 aa)). Residues 30-37 (GRSNAGKS), 57-61 (GMTRE), 95-98 (DLPG), 162-165 (TKAD), and 192-195 (ISSA) each bind GTP. The Mg(2+) site is built by Ser-37 and Thr-59.

It belongs to the TRAFAC class TrmE-Era-EngA-EngB-Septin-like GTPase superfamily. EngB GTPase family. The cofactor is Mg(2+).

Its function is as follows. Necessary for normal cell division and for the maintenance of normal septation. This Treponema denticola (strain ATCC 35405 / DSM 14222 / CIP 103919 / JCM 8153 / KCTC 15104) protein is Probable GTP-binding protein EngB.